Consider the following 380-residue polypeptide: uncharacterized protein (380 aa).

Disordered regions lie at residues 278 to 323 (AATI…PRVA) and 345 to 368 (SLPGRESTPSDDGGSLHPSGRPRR). The segment covering 301–319 (RNGPRRPARRGTSRGRRCA) has biased composition (basic residues).

This is an uncharacterized protein from Mycobacterium tuberculosis (strain CDC 1551 / Oshkosh).